Here is a 495-residue protein sequence, read N- to C-terminus: uncharacterized protein (495 aa).

The span at 305-317 shows a compositional bias: low complexity; it reads DYNNNNNENYSGS. Residues 305–404 are disordered; it reads DYNNNNNENY…LDEEDNRKNK (100 aa). Acidic residues predominate over residues 335–347; sequence YDNDENNDDENND. Residues 348–363 show a composition bias toward low complexity; that stretch reads ENNNNNNNNNNNNNNN. Over residues 386–398 the composition is skewed to acidic residues; it reads SDDDEADNELDEE.

This is an uncharacterized protein from Dictyostelium discoideum (Social amoeba).